The following is a 328-amino-acid chain: Methionyl-tRNA formyltransferase (328 aa).

(6S)-5,6,7,8-tetrahydrofolate is bound at residue 110–113; that stretch reads SLLP.

Belongs to the Fmt family.

It catalyses the reaction L-methionyl-tRNA(fMet) + (6R)-10-formyltetrahydrofolate = N-formyl-L-methionyl-tRNA(fMet) + (6S)-5,6,7,8-tetrahydrofolate + H(+). Attaches a formyl group to the free amino group of methionyl-tRNA(fMet). The formyl group appears to play a dual role in the initiator identity of N-formylmethionyl-tRNA by promoting its recognition by IF2 and preventing the misappropriation of this tRNA by the elongation apparatus. In Prochlorococcus marinus subsp. pastoris (strain CCMP1986 / NIES-2087 / MED4), this protein is Methionyl-tRNA formyltransferase.